The sequence spans 136 residues: Glutaredoxin-C8 (136 aa).

In terms of domain architecture, Glutaredoxin spans 33 to 135 (SSFVKSTVKA…KLLNIDVKED (103 aa)). C53 and C56 are oxidised to a cystine.

It belongs to the glutaredoxin family. CPYC subfamily.

The protein localises to the cytoplasm. Has a glutathione-disulfide oxidoreductase activity in the presence of NADPH and glutathione reductase. Reduces low molecular weight disulfides and proteins. This chain is Glutaredoxin-C8 (GRXC8), found in Oryza sativa subsp. japonica (Rice).